The sequence spans 288 residues: Pantothenate synthetase (288 aa).

30–37 (MGFLHEGH) lines the ATP pocket. The Proton donor role is filled by His37. Gln61 contributes to the (R)-pantoate binding site. Beta-alanine is bound at residue Gln61. ATP is bound at residue 147–150 (GLKD). Gln153 provides a ligand contact to (R)-pantoate. Residues Val176 and 184–187 (KSSR) each bind ATP.

The protein belongs to the pantothenate synthetase family. In terms of assembly, homodimer.

It is found in the cytoplasm. It catalyses the reaction (R)-pantoate + beta-alanine + ATP = (R)-pantothenate + AMP + diphosphate + H(+). It functions in the pathway cofactor biosynthesis; (R)-pantothenate biosynthesis; (R)-pantothenate from (R)-pantoate and beta-alanine: step 1/1. Catalyzes the condensation of pantoate with beta-alanine in an ATP-dependent reaction via a pantoyl-adenylate intermediate. This Bacillus pumilus (strain SAFR-032) protein is Pantothenate synthetase.